The primary structure comprises 220 residues: Probable cytidylate kinase (220 aa).

ATP is bound at residue 10 to 18; that stretch reads GPAASGKSS.

It belongs to the cytidylate kinase family. Type 1 subfamily.

It carries out the reaction CMP + ATP = CDP + ADP. The catalysed reaction is dCMP + ATP = dCDP + ADP. The polypeptide is Probable cytidylate kinase (Encephalitozoon cuniculi (strain GB-M1) (Microsporidian parasite)).